The sequence spans 244 residues: Glucosamine-6-phosphate deaminase (244 aa).

Asp67 functions as the Proton acceptor; for enolization step in the catalytic mechanism. Asn136 acts as the For ring-opening step in catalysis. The active-site Proton acceptor; for ring-opening step is His138. Residue Glu143 is the For ring-opening step of the active site.

It belongs to the glucosamine/galactosamine-6-phosphate isomerase family. NagB subfamily.

The catalysed reaction is alpha-D-glucosamine 6-phosphate + H2O = beta-D-fructose 6-phosphate + NH4(+). The protein operates within amino-sugar metabolism; N-acetylneuraminate degradation; D-fructose 6-phosphate from N-acetylneuraminate: step 5/5. Functionally, catalyzes the reversible isomerization-deamination of glucosamine 6-phosphate (GlcN6P) to form fructose 6-phosphate (Fru6P) and ammonium ion. This Clostridium botulinum (strain 657 / Type Ba4) protein is Glucosamine-6-phosphate deaminase.